A 92-amino-acid chain; its full sequence is Acylphosphatase (92 aa).

C5 and C49 are oxidised to a cystine. Residues 5-92 (CIIAWIYGRV…SGELTDFRIR (88 aa)) enclose the Acylphosphatase-like domain. Residues R20 and N38 contribute to the active site.

It belongs to the acylphosphatase family.

It catalyses the reaction an acyl phosphate + H2O = a carboxylate + phosphate + H(+). The protein is Acylphosphatase of Escherichia coli O1:K1 / APEC.